An 84-amino-acid polypeptide reads, in one-letter code: Large ribosomal subunit protein bL27 (84 aa).

The disordered stretch occupies residues 1–25; sequence MAHKKGQGSTQNNRDSAGRRLGVKK.

Belongs to the bacterial ribosomal protein bL27 family.

This chain is Large ribosomal subunit protein bL27, found in Sulfurovum sp. (strain NBC37-1).